A 142-amino-acid polypeptide reads, in one-letter code: 2-aminomuconate deaminase (142 aa).

It belongs to the 2-aminomuconate deaminase family. In terms of assembly, homotetramer.

The catalysed reaction is (2Z,4E)-2-aminomuconate + H2O = (3E)-2-oxohex-3-enedioate + NH4(+). Slightly inhibited by Pb(2+), Hg(+) and Cu(2+). Functionally, involved in the modified meta-cleavage pathway for the 2-aminophenol catabolism. Only active toward 2-aminomuconic acid. In Pseudomonas sp, this protein is 2-aminomuconate deaminase (amnD).